Consider the following 521-residue polypeptide: Tetratricopeptide repeat and J domain-containing co-chaperone DNJ1 (521 aa).

The first 21 residues, 1–21 (MHLNLAGLAVAATAFLATASA), serve as a signal peptide directing secretion. 7 TPR repeats span residues 33–66 (VSNL…DPTN), 67–100 (YLSL…KPGF), 102–134 (GAHL…PKSA), 176–209 (PHLR…KPGD), 211–244 (SPHI…DPDS), 315–348 (LENL…NPDS), and 349–382 (FWGL…RPDQ). Positions 404–473 (DYYKVLGVEN…ELRARFDRGD (70 aa)) constitute a J domain. Residues 464–474 (ELRARFDRGDD) show a composition bias toward basic and acidic residues. A disordered region spans residues 464-521 (ELRARFDRGDDPNSQERPNPFQGQGNPFGGGHPFMFQQGGGGGGPNIKFQFGGQPFGF). Gly residues predominate over residues 489 to 508 (NPFGGGHPFMFQQGGGGGGP). Residues 509–521 (NIKFQFGGQPFGF) show a composition bias toward low complexity.

It localises to the endoplasmic reticulum lumen. Its function is as follows. Endoplasmic reticulum co-chaperone required for the of virulence factors such as PG1, the major endopolygalacturonase produced during the infection of tomato plants. In Fusarium oxysporum f. sp. lycopersici (strain 4287 / CBS 123668 / FGSC 9935 / NRRL 34936) (Fusarium vascular wilt of tomato), this protein is Tetratricopeptide repeat and J domain-containing co-chaperone DNJ1.